A 45-amino-acid chain; its full sequence is MPLYDYKCQSKDCAKEYEKIKKISGRDTGVCPDCHRLAVRLVSAS.

This is an uncharacterized protein from Escherichia coli (Bacteriophage T4).